A 338-amino-acid polypeptide reads, in one-letter code: MRQVTVTEHLLLHQTKSPAATGQFTALLYDLILAAKIISKSVNKAGLLDVLGGTGQVNVQGEHVQKLDEYANRVLIHRMERTGVLCAMASEENADLIRVPERFEAGDYILIFDPLDGSSNIDVNINVGTIFSILKRKPGASGSKDVTLGDVLQSGVEQVAAGYFLYGPSTMLVYSSGQGVHGFTLDPSVGEFLLSHPDIRYPEQGRIYSVNESYWHYWDEPTREVVSYFKGPDNPLGKPYSLRYVGSLVADFHRNLFYGGIFMYPMDYRLPEKPQGKLRLMCEASPLAFLAEQAGGRATDGTKRILDIVPGELHQRVPLFIGSAGDVDAVEAIYRRHS.

The Mg(2+) site is built by glutamate 91, aspartate 113, leucine 115, and aspartate 116. Residues 116-119, asparagine 211, tyrosine 244, and lysine 277 each bind substrate; that span reads DGSS. Glutamate 283 serves as a coordination point for Mg(2+).

It belongs to the FBPase class 1 family. As to quaternary structure, homotetramer. Mg(2+) serves as cofactor.

It localises to the cytoplasm. It carries out the reaction beta-D-fructose 1,6-bisphosphate + H2O = beta-D-fructose 6-phosphate + phosphate. Its pathway is carbohydrate biosynthesis; gluconeogenesis. The chain is Fructose-1,6-bisphosphatase class 1 from Oleidesulfovibrio alaskensis (strain ATCC BAA-1058 / DSM 17464 / G20) (Desulfovibrio alaskensis).